We begin with the raw amino-acid sequence, 306 residues long: Glutathione transport system permease protein GsiC (306 aa).

Residues 1-8 (MLNYVIKR) are Cytoplasmic-facing. The helical transmembrane segment at 9-29 (LLGLIPTLFIVSVLVFLFVHM) threads the bilayer. Over 30 to 102 (LPGDPARLIA…SRFMPTLWLT (73 aa)) the chain is Periplasmic. Positions 95–292 (FMPTLWLTIT…LEFILINLVV (198 aa)) constitute an ABC transmembrane type-1 domain. Residues 103-123 (ITSMVWAVIFGMAAGIIAAVW) form a helical membrane-spanning segment. The Cytoplasmic portion of the chain corresponds to 124–134 (RNRWPDRLSMT). The chain crosses the membrane as a helical span at residues 135 to 155 (IAVSGISFPAFALGMLLIQVF). At 156-168 (SVELGWLPTVGAD) the chain is on the periplasmic side. Residues 169-189 (SWQHYILPSLTLGAAVAAVMA) traverse the membrane as a helical segment. Residues 190–228 (RFTRASFVDVLSEDYMRTARAKGVSETWVVLKHGLRNAM) are Cytoplasmic-facing. Residues 229-249 (IPVVTMMGLQFGFLLGGSIVV) traverse the membrane as a helical segment. The Periplasmic segment spans residues 250–277 (EKVFNWPGLGRLLVDSVEMRDYPVIQAE). The chain crosses the membrane as a helical span at residues 278–298 (ILLFSLEFILINLVVDVLYAA). At 299-306 (INPAIRYK) the chain is on the cytoplasmic side.

Belongs to the binding-protein-dependent transport system permease family. The complex is composed of two ATP-binding proteins (GsiA), two transmembrane proteins (GsiC and GsiD) and a solute-binding protein (GsiB).

The protein localises to the cell inner membrane. Functionally, part of the ABC transporter complex GsiABCD involved in glutathione import. Probably responsible for the translocation of the substrate across the membrane. In Escherichia coli O1:K1 / APEC, this protein is Glutathione transport system permease protein GsiC.